The following is a 320-amino-acid chain: Melanocyte-stimulating hormone receptor (320 aa).

At 1 to 40 (MPVLGPERRLLASLSSAPPAAPRLGLAANQTNQTGPQCLE) the chain is on the extracellular side. Asparagine 32 carries N-linked (GlcNAc...) asparagine glycosylation. A helical transmembrane segment spans residues 41-66 (VSIPDGLFLSLGLVSLVENVLVVAAI). At 67–75 (AKNRNLHSP) the chain is on the cytoplasmic side. Residues 76-96 (MYYFVCCLAVSDLLVSVSNVL) traverse the membrane as a helical segment. Topologically, residues 97–121 (ETAVLLLLEAGALAAQAAVVQQLDN) are extracellular. A helical transmembrane segment spans residues 122–143 (VMDVLICGSMVSSLCFLGAIAV). Residues 144–166 (DRYVSIFYALRYHSIVTLPRAGR) are Cytoplasmic-facing. Residues 167 to 186 (AIAAIWAGSVLSSTLFIAYY) traverse the membrane as a helical segment. At 187 to 194 (HHTAVLLG) the chain is on the extracellular side. The helical transmembrane segment at 195 to 214 (LVSFFVAMLALMAVLYVHML) threads the bilayer. Residues 215-243 (ARACQHGRHIARLHKTQHPTRQGCGLKGA) are Cytoplasmic-facing. Residues 244–269 (ATLTILLGVFLLCWAPFFLHLSLVVL) traverse the membrane as a helical segment. Residues 270–282 (CPQHPTCGCVFKN) lie on the Extracellular side of the membrane. A helical membrane pass occupies residues 283–303 (VNLFLALVICNSIVDPLIYAF). The Cytoplasmic segment spans residues 304 to 320 (RSQELRKTLQEVLQCSW).

It belongs to the G-protein coupled receptor 1 family. Interacts with MGRN1, but does not undergo MGRN1-mediated ubiquitination; this interaction competes with GNAS-binding and thus inhibits agonist-induced cAMP production. Interacts with OPN3; the interaction results in a decrease in MC1R-mediated cAMP signaling and ultimately a decrease in melanin production in melanocytes.

It localises to the cell membrane. In terms of biological role, receptor for MSH (alpha, beta and gamma) and ACTH. The activity of this receptor is mediated by G proteins which activate adenylate cyclase. Mediates melanogenesis, the production of eumelanin (black/brown) and phaeomelanin (red/yellow), via regulation of cAMP signaling in melanocytes. This is Melanocyte-stimulating hormone receptor (MC1R) from Sus scrofa (Pig).